The sequence spans 308 residues: Porphobilinogen deaminase (308 aa).

At Cys240 the chain carries S-(dipyrrolylmethanemethyl)cysteine.

It belongs to the HMBS family. As to quaternary structure, monomer. The cofactor is dipyrromethane.

It catalyses the reaction 4 porphobilinogen + H2O = hydroxymethylbilane + 4 NH4(+). It participates in porphyrin-containing compound metabolism; protoporphyrin-IX biosynthesis; coproporphyrinogen-III from 5-aminolevulinate: step 2/4. Functionally, tetrapolymerization of the monopyrrole PBG into the hydroxymethylbilane pre-uroporphyrinogen in several discrete steps. The sequence is that of Porphobilinogen deaminase from Desulfitobacterium hafniense (strain DSM 10664 / DCB-2).